The primary structure comprises 206 residues: Ras-related protein O-RAL (206 aa).

21-28 serves as a coordination point for GTP; sequence GSGGVGKS. The short motif at 43–51 is the Effector region element; sequence YEPTKADSY. GTP is bound by residues 68–72 and 128–131; these read DTAGQ and NKSD. Residues 180–189 are compositionally biased toward basic and acidic residues; that stretch reads KMSENKDKNG. The tract at residues 180–206 is disordered; that stretch reads KMSENKDKNGKKSSRNKKSLRERCCIL. Cys-203 carries the post-translational modification Cysteine methyl ester. A lipid anchor (S-geranylgeranyl cysteine) is attached at Cys-203. Positions 204-206 are cleaved as a propeptide — removed in mature form; it reads CIL.

The protein belongs to the small GTPase superfamily. Ras family.

It localises to the cell membrane. The catalysed reaction is GTP + H2O = GDP + phosphate + H(+). This chain is Ras-related protein O-RAL, found in Diplobatis ommata (Ocellated electric ray).